An 82-amino-acid chain; its full sequence is Large ribosomal subunit protein uL23 (82 aa).

This sequence belongs to the universal ribosomal protein uL23 family. Part of the 50S ribosomal subunit. Contacts protein L29.

Its function is as follows. Binds to 23S rRNA. One of the proteins that surrounds the polypeptide exit tunnel on the outside of the ribosome. This Methanosarcina barkeri (strain Fusaro / DSM 804) protein is Large ribosomal subunit protein uL23.